Reading from the N-terminus, the 102-residue chain is Small ribosomal subunit protein uS10 (102 aa).

The protein belongs to the universal ribosomal protein uS10 family. As to quaternary structure, part of the 30S ribosomal subunit.

Involved in the binding of tRNA to the ribosomes. This is Small ribosomal subunit protein uS10 from Leptospira borgpetersenii serovar Hardjo-bovis (strain JB197).